The following is a 147-amino-acid chain: Nucleoside diphosphate kinase (147 aa).

Lysine 11, phenylalanine 59, arginine 87, threonine 93, arginine 104, and asparagine 114 together coordinate ATP. Histidine 117 functions as the Pros-phosphohistidine intermediate in the catalytic mechanism.

The protein belongs to the NDK family. In terms of assembly, homotetramer. It depends on Mg(2+) as a cofactor.

The protein resides in the cytoplasm. The enzyme catalyses a 2'-deoxyribonucleoside 5'-diphosphate + ATP = a 2'-deoxyribonucleoside 5'-triphosphate + ADP. It carries out the reaction a ribonucleoside 5'-diphosphate + ATP = a ribonucleoside 5'-triphosphate + ADP. In terms of biological role, major role in the synthesis of nucleoside triphosphates other than ATP. The ATP gamma phosphate is transferred to the NDP beta phosphate via a ping-pong mechanism, using a phosphorylated active-site intermediate. In Anaeromyxobacter dehalogenans (strain 2CP-C), this protein is Nucleoside diphosphate kinase.